The primary structure comprises 691 residues: POU domain, class 6, transcription factor 2 (691 aa).

3 disordered regions span residues 1–61 (MIAG…RGNT), 188–297 (QQQQ…LQLV), and 435–461 (GQAATSHSPVRQASSSSSSSSSSSALS). Residues 17-28 (MNAELRGEDKAA) are compositionally biased toward basic and acidic residues. Composition is skewed to low complexity over residues 188–197 (QQQQQQQQQQ) and 206–216 (QHPQPASQAPP). The span at 217 to 237 (QSQPTPPHQPPPASQQLPAPP) shows a compositional bias: pro residues. Positions 238–272 (AQLEQATQPQQHQPHSHPQNQTQNQPSPTQQSSSP) are enriched in low complexity. Over residues 437 to 447 (AATSHSPVRQA) the composition is skewed to polar residues. Residues 448 to 458 (SSSSSSSSSSS) are compositionally biased toward low complexity. The POU-specific domain occupies 476 to 586 (VDGVNLEEIR…VLERWMAEAE (111 aa)). The homeobox DNA-binding region spans 607–666 (KRKRRTSFTPQALEILNAHFEKNTHPSGQEMTEIAEKLNYDREVVRVWFCNKRQALKNTI). The segment at 670 to 691 (KQHEPTSAAPLEPLADSPEENC) is disordered.

Belongs to the POU transcription factor family. Class-6 subfamily. As to expression, expressed in kidney, heart, muscle, spleen and ovary, but not in lung.

It localises to the nucleus. Its function is as follows. Probable transcription factor likely to be involved in early steps in the differentiation of amacrine and ganglion cells. Recognizes and binds to the DNA sequence 5'-ATGCAAAT-3'. The chain is POU domain, class 6, transcription factor 2 (Pou6f2) from Mus musculus (Mouse).